Reading from the N-terminus, the 271-residue chain is Imidazole glycerol phosphate synthase subunit HisF (271 aa).

Residues D12 and D136 contribute to the active site.

This sequence belongs to the HisA/HisF family. As to quaternary structure, heterodimer of HisH and HisF.

Its subcellular location is the cytoplasm. The enzyme catalyses 5-[(5-phospho-1-deoxy-D-ribulos-1-ylimino)methylamino]-1-(5-phospho-beta-D-ribosyl)imidazole-4-carboxamide + L-glutamine = D-erythro-1-(imidazol-4-yl)glycerol 3-phosphate + 5-amino-1-(5-phospho-beta-D-ribosyl)imidazole-4-carboxamide + L-glutamate + H(+). It participates in amino-acid biosynthesis; L-histidine biosynthesis; L-histidine from 5-phospho-alpha-D-ribose 1-diphosphate: step 5/9. Its function is as follows. IGPS catalyzes the conversion of PRFAR and glutamine to IGP, AICAR and glutamate. The HisF subunit catalyzes the cyclization activity that produces IGP and AICAR from PRFAR using the ammonia provided by the HisH subunit. The protein is Imidazole glycerol phosphate synthase subunit HisF of Haloarcula marismortui (strain ATCC 43049 / DSM 3752 / JCM 8966 / VKM B-1809) (Halobacterium marismortui).